The sequence spans 547 residues: Inositol 1,4,5-trisphosphate receptor-interacting protein-like 1 (547 aa).

Positions 1 to 22 (MAVISLMFLAVMYVVHHPLMVS) are cleaved as a signal peptide. The Extracellular portion of the chain corresponds to 23 to 96 (DRMDLDTLAR…PFQAGGQDGG (74 aa)). Positions 28–66 (DTLARSRQLEKRMSEEMRQLEMEFEERSRAAEQKQKVEN) form a coiled coil. The helical transmembrane segment at 97 to 117 (PLGWILGNLWNAGLFCLFLIF) threads the bilayer. Residues 118 to 547 (ELLRQSMQHE…LPCSPVAGGL (430 aa)) lie on the Cytoplasmic side of the membrane.

It belongs to the ITPRIP family.

The protein resides in the cell membrane. Functionally, functions as a ligand of CD3E, inhibiting TCR-CD3 complex signaling to regulate T cell activation. Induces stable CD3E-NCK1 binding, thereby preventing the CD3E-ZAP70 interaction and subsequently inhibiting the activation of the downstream ERK-NFkB signaling cascade and calcium influx. In Mus musculus (Mouse), this protein is Inositol 1,4,5-trisphosphate receptor-interacting protein-like 1 (Itpripl1).